The primary structure comprises 704 residues: MPSKEFIIPLILLCFYSVNGFVAVISSLVELFIHKASWNSIKIFFYSLLILQCLCRCIIIGWGMIETVQGGEFYSNFPSLLFISYAGLVALQMIQFLPNDNQYLLLSEGKKNNHKVKVGTNILIFFNLFMYFGMFLLFGIAEKQVGNSTSFNHHGNHNSTTSTSTDEIPLVSTEVGELYLFGDKDPIYIVLDCFYFVCLLLLLIFHSYVGWKTYKRNKDLFGIKLNVIHLILLICIFIRSLLVIIDPSSPNNSILHIDTESWLIYIYTISYYVVGEIIPGMLLIVIEFLLPYHKRKDFINIGGELSSYQDVWKSENIAIHELLGMGGSGAMVHKCTVKKGPLRGGTFAVKVMKDCTNEDIESLENEIRVYEKLKSPYIVSYQGSSKVVGSSGQIFEIRLFMEYIPHTLDKYLLARSVCGDSNGGGSSRNLKNYFLHMQEYQSSPQSSISYYQNNNNNNNNSPLIQPQQQQQYVYPYYFRYSQVVWYLYQISIGLDNLHANKIAHRDLKSNNIFVTLSESEVKICKIGDFDISRSFNNPKVLNVLSNPTALQQQKLNNFFQSATTTTTTEQTTEPIEVAATTTPQTIHSAFQHDILSFGFIVLDFLTLSNYSCFDSKFDTSNYYDDDKFNNKSNTKIKKPDLPDYIKKDEKLWEPVIQLYKSCTSDDPNKRPSSLGVKFHLANLYKDIIESGTEVWSIEKDSSSK.

Residues Met-1–Glu-5 are Extracellular-facing. The chain crosses the membrane as a helical span at residues Phe-6–Ser-26. Topologically, residues Ser-27–Lys-42 are cytoplasmic. The chain crosses the membrane as a helical span at residues Ile-43–Gly-63. Residues Met-64 to Asn-76 are Extracellular-facing. Residues Phe-77–Leu-97 form a helical membrane-spanning segment. Topologically, residues Pro-98–Asn-121 are cytoplasmic. A helical membrane pass occupies residues Ile-122 to Glu-142. Residues Lys-143–Asp-185 lie on the Extracellular side of the membrane. 2 N-linked (GlcNAc...) asparagine glycosylation sites follow: Asn-147 and Asn-158. The chain crosses the membrane as a helical span at residues Pro-186–His-206. The Cytoplasmic segment spans residues Ser-207–Lys-224. Residues Leu-225–Ile-245 traverse the membrane as a helical segment. The Extracellular segment spans residues Asp-246–Tyr-265. Residue Asn-251 is glycosylated (N-linked (GlcNAc...) asparagine). Residues Ile-266–Ile-286 form a helical membrane-spanning segment. Residues Glu-287–Lys-704 are Cytoplasmic-facing. One can recognise a Protein kinase domain in the interval Ile-317–Asn-682. ATP-binding positions include Leu-323 to Met-331 and Lys-350. Asp-506 acts as the Proton acceptor in catalysis.

It belongs to the protein kinase superfamily. Ser/Thr protein kinase family.

Its subcellular location is the membrane. It carries out the reaction L-seryl-[protein] + ATP = O-phospho-L-seryl-[protein] + ADP + H(+). The catalysed reaction is L-threonyl-[protein] + ATP = O-phospho-L-threonyl-[protein] + ADP + H(+). This Dictyostelium discoideum (Social amoeba) protein is Seven transmembrane domain-containing serine/threonine-protein kinase 2 (7tmk2).